Here is a 286-residue protein sequence, read N- to C-terminus: Aminoglycoside N(3)-acetyltransferase III (286 aa).

The protein belongs to the antibiotic N-acetyltransferase family.

It carries out the reaction a 2-deoxystreptamine antibiotic + acetyl-CoA = an N(3)-acetyl-2-deoxystreptamine antibiotic + CoA + H(+). In terms of biological role, resistance to antibiotics containing the 2-deoxy-streptamine ring including gentamicin, kanamycin, tobramycin, neomycin and apramycin. The protein is Aminoglycoside N(3)-acetyltransferase III (aacC2) of Acinetobacter baumannii.